Here is a 124-residue protein sequence, read N- to C-terminus: Meiotically up-regulated gene 103 protein (124 aa).

The protein resides in the nucleus. The protein localises to the nucleolus. In terms of biological role, has a role in meiosis. This chain is Meiotically up-regulated gene 103 protein (mug103), found in Schizosaccharomyces pombe (strain 972 / ATCC 24843) (Fission yeast).